Consider the following 232-residue polypeptide: Orotate phosphoribosyltransferase (232 aa).

5-phospho-alpha-D-ribose 1-diphosphate contacts are provided by residues arginine 107, lysine 108, lysine 111, histidine 113, and glutamate 133–serine 141. Threonine 137 is a binding site for orotate.

Belongs to the purine/pyrimidine phosphoribosyltransferase family. PyrE subfamily. As to quaternary structure, homodimer. Mg(2+) is required as a cofactor.

It catalyses the reaction orotidine 5'-phosphate + diphosphate = orotate + 5-phospho-alpha-D-ribose 1-diphosphate. The protein operates within pyrimidine metabolism; UMP biosynthesis via de novo pathway; UMP from orotate: step 1/2. Functionally, catalyzes the transfer of a ribosyl phosphate group from 5-phosphoribose 1-diphosphate to orotate, leading to the formation of orotidine monophosphate (OMP). This Rhizobium rhizogenes (strain K84 / ATCC BAA-868) (Agrobacterium radiobacter) protein is Orotate phosphoribosyltransferase.